The primary structure comprises 297 residues: 4-hydroxy-tetrahydrodipicolinate synthase (297 aa).

Threonine 46 serves as a coordination point for pyruvate. Catalysis depends on tyrosine 134, which acts as the Proton donor/acceptor. The active-site Schiff-base intermediate with substrate is lysine 162. A pyruvate-binding site is contributed by isoleucine 204.

Belongs to the DapA family. In terms of assembly, homotetramer; dimer of dimers.

Its subcellular location is the cytoplasm. It catalyses the reaction L-aspartate 4-semialdehyde + pyruvate = (2S,4S)-4-hydroxy-2,3,4,5-tetrahydrodipicolinate + H2O + H(+). It participates in amino-acid biosynthesis; L-lysine biosynthesis via DAP pathway; (S)-tetrahydrodipicolinate from L-aspartate: step 3/4. Its function is as follows. Catalyzes the condensation of (S)-aspartate-beta-semialdehyde [(S)-ASA] and pyruvate to 4-hydroxy-tetrahydrodipicolinate (HTPA). The polypeptide is 4-hydroxy-tetrahydrodipicolinate synthase (Stenotrophomonas maltophilia (strain K279a)).